The sequence spans 123 residues: U11/U12 small nuclear ribonucleoprotein 25 kDa protein (123 aa).

The Ubiquitin-like domain maps to 32–123; the sequence is MTVRVCKMDG…VSFIKKLRQK (92 aa).

Component of the U11/U12 snRNPs that are part of the U12-type spliceosome.

Its subcellular location is the nucleus. This is U11/U12 small nuclear ribonucleoprotein 25 kDa protein (Snrnp25) from Mus musculus (Mouse).